Here is a 339-residue protein sequence, read N- to C-terminus: Anthranilate phosphoribosyltransferase (339 aa).

5-phospho-alpha-D-ribose 1-diphosphate-binding positions include glycine 79, 82–83 (GD), serine 87, 89–92 (NIST), 107–115 (KHGNRAASS), and alanine 119. Glycine 79 is an anthranilate binding site. Serine 91 contacts Mg(2+). Asparagine 110 provides a ligand contact to anthranilate. Arginine 165 lines the anthranilate pocket. Mg(2+) is bound by residues aspartate 224 and glutamate 225.

This sequence belongs to the anthranilate phosphoribosyltransferase family. As to quaternary structure, homodimer. Mg(2+) is required as a cofactor.

The enzyme catalyses N-(5-phospho-beta-D-ribosyl)anthranilate + diphosphate = 5-phospho-alpha-D-ribose 1-diphosphate + anthranilate. It functions in the pathway amino-acid biosynthesis; L-tryptophan biosynthesis; L-tryptophan from chorismate: step 2/5. Functionally, catalyzes the transfer of the phosphoribosyl group of 5-phosphorylribose-1-pyrophosphate (PRPP) to anthranilate to yield N-(5'-phosphoribosyl)-anthranilate (PRA). The sequence is that of Anthranilate phosphoribosyltransferase from Lactiplantibacillus plantarum (strain ATCC BAA-793 / NCIMB 8826 / WCFS1) (Lactobacillus plantarum).